Consider the following 470-residue polypeptide: Acetyl-CoA decarbonylase/synthase complex subunit beta 2 (470 aa).

4 residues coordinate [Ni-Fe-S] cluster: C190, C193, C279, and C281.

This sequence belongs to the CdhC family. Monomer. The ACDS complex is made up of alpha, epsilon, beta, gamma and delta chains with a probable stoichiometry of (alpha(2)epsilon(2))(4)-beta(8)-(gamma(1)delta(1))(8) (Potential). [Ni-Fe-S] cluster serves as cofactor.

The catalysed reaction is Co(I)-[corrinoid Fe-S protein] + acetyl-CoA + H(+) = methyl-Co(III)-[corrinoid Fe-S protein] + CO + CoA. It participates in one-carbon metabolism; methanogenesis from acetate. In terms of biological role, part of a complex that catalyzes the reversible cleavage of acetyl-CoA, allowing growth on acetate as sole source of carbon and energy. The alpha-epsilon complex generates CO from CO(2), while the beta subunit (this protein) combines the CO with CoA and a methyl group to form acetyl-CoA. The methyl group, which is incorporated into acetyl-CoA, is transferred to the beta subunit by a corrinoid iron-sulfur protein (the gamma-delta complex). This chain is Acetyl-CoA decarbonylase/synthase complex subunit beta 2 (cdhC2), found in Methanosarcina mazei (strain ATCC BAA-159 / DSM 3647 / Goe1 / Go1 / JCM 11833 / OCM 88) (Methanosarcina frisia).